Here is a 174-residue protein sequence, read N- to C-terminus: Ribosome maturation factor RimM (174 aa).

The PRC barrel domain maps to 98–171 (EGEFYFHQII…TIHIEVMEGL (74 aa)).

Belongs to the RimM family. As to quaternary structure, binds ribosomal protein uS19.

The protein localises to the cytoplasm. Functionally, an accessory protein needed during the final step in the assembly of 30S ribosomal subunit, possibly for assembly of the head region. Essential for efficient processing of 16S rRNA. May be needed both before and after RbfA during the maturation of 16S rRNA. It has affinity for free ribosomal 30S subunits but not for 70S ribosomes. This chain is Ribosome maturation factor RimM, found in Bacillus pumilus (strain SAFR-032).